Reading from the N-terminus, the 911-residue chain is Probable dipeptidyl-aminopeptidase B (911 aa).

Positions 1–39 are disordered; that stretch reads MPRPRAAKEEETELLAQHQESPRPSSDGSEASASSISTT. Topologically, residues 1-97 are cytoplasmic; that stretch reads MPRPRAAKEE…TPVDKKARRT (97 aa). Residues 25-39 show a composition bias toward low complexity; sequence SSDGSEASASSISTT. Residues 98-118 traverse the membrane as a helical; Signal-anchor for type II membrane protein segment; sequence LWIVGTICAVGWALALVSFLM. Topologically, residues 119 to 911 are vacuolar; that stretch reads NGNYKHSSTR…AQADARSLGR (793 aa). Residues Asn-268 and Asn-564 are each glycosylated (N-linked (GlcNAc...) asparagine). Ser-755 acts as the Charge relay system in catalysis. The N-linked (GlcNAc...) asparagine glycan is linked to Asn-809. Catalysis depends on charge relay system residues Asp-832 and His-865.

Belongs to the peptidase S9B family.

It is found in the vacuole membrane. The catalysed reaction is Release of an N-terminal dipeptide, Xaa-Yaa-|-Zaa-, from a polypeptide, preferentially when Yaa is Pro, provided Zaa is neither Pro nor hydroxyproline.. Functionally, type IV dipeptidyl-peptidase which removes N-terminal dipeptides sequentially from polypeptides having unsubstituted N-termini provided that the penultimate residue is proline. This is Probable dipeptidyl-aminopeptidase B (DAPB) from Phaeosphaeria nodorum (strain SN15 / ATCC MYA-4574 / FGSC 10173) (Glume blotch fungus).